The chain runs to 419 residues: Gamma-glutamyl phosphate reductase (419 aa).

Belongs to the gamma-glutamyl phosphate reductase family.

The protein localises to the cytoplasm. It catalyses the reaction L-glutamate 5-semialdehyde + phosphate + NADP(+) = L-glutamyl 5-phosphate + NADPH + H(+). It participates in amino-acid biosynthesis; L-proline biosynthesis; L-glutamate 5-semialdehyde from L-glutamate: step 2/2. Catalyzes the NADPH-dependent reduction of L-glutamate 5-phosphate into L-glutamate 5-semialdehyde and phosphate. The product spontaneously undergoes cyclization to form 1-pyrroline-5-carboxylate. This chain is Gamma-glutamyl phosphate reductase, found in Nitratidesulfovibrio vulgaris (strain ATCC 29579 / DSM 644 / CCUG 34227 / NCIMB 8303 / VKM B-1760 / Hildenborough) (Desulfovibrio vulgaris).